Consider the following 94-residue polypeptide: MTKSELIAQLAARFPQLVAKDADYAVKMILDAMSDALARGDRIEIRGFGSFALNYRPPRVGRNPKSGEKVHVPEKYVPHFKAGKELRERVDIVE.

This sequence belongs to the bacterial histone-like protein family. In terms of assembly, heterodimer of an alpha and a beta chain.

Functionally, this protein is one of the two subunits of integration host factor, a specific DNA-binding protein that functions in genetic recombination as well as in transcriptional and translational control. The chain is Integration host factor subunit beta from Azoarcus sp. (strain BH72).